Consider the following 422-residue polypeptide: S100P-binding protein (422 aa).

Disordered regions lie at residues Met-1–Ser-28, Leu-61–Lys-135, and Tyr-170–Lys-292. Over residues Asp-80–Lys-90 the composition is skewed to basic and acidic residues. At Ser-195 the chain carries Phosphoserine. Positions Val-231 to Lys-241 are enriched in basic and acidic residues. Over residues Thr-255–Ser-269 the composition is skewed to polar residues. Positions Lys-274–Lys-283 are enriched in low complexity.

Interacts with S100P.

The protein localises to the nucleus. The sequence is that of S100P-binding protein from Bos taurus (Bovine).